The primary structure comprises 147 residues: Nitric oxide reductase subunit C (147 aa).

A helical; Signal-anchor transmembrane segment spans residues 13 to 29; the sequence is VFYGGSLFFIAVFVGLT. C59, C62, and H63 together coordinate heme c.

Heterodimer of cytochromes b (large subunit) and c (small subunit).

It is found in the cell membrane. Component of the anaerobic respiratory chain that transforms nitrate to dinitrogen (denitrification). The protein is Nitric oxide reductase subunit C (norC) of Cereibacter sphaeroides (strain ATCC 17025 / ATH 2.4.3) (Rhodobacter sphaeroides).